A 165-amino-acid chain; its full sequence is Nucleotide-binding protein P9211_04811 (165 aa).

The protein belongs to the YajQ family.

Functionally, nucleotide-binding protein. This Prochlorococcus marinus (strain MIT 9211) protein is Nucleotide-binding protein P9211_04811.